Reading from the N-terminus, the 659-residue chain is MAAFSKYLTARNSSLAGAAFLLLCLLHKRRRALGLHGKKSGKPPLQNNEKEGKKERAVVDKVFFSRLIQILKIMVPRTFCKETGYLVLIAVMLVSRTYCDVWMIQNGTLIESGIIGRSRKDFKRYLLNFIAAMPLISLVNNFLKYGLNELKLCFRVRLTKYLYEEYLQAFTYYKMGNLDNRIANPDQLLTQDVEKFCNSVVDLYSNLSKPFLDIVLYIFKLTSAIGAQGPASMMAYLVVSGLFLTRLRRPIGKMTITEQKYEGEYRYVNSRLITNSEEIAFYNGNKREKQTVHSVFRKLVEHLHNFILFRFSMGFIDSIIAKYLATVVGYLVVSRPFLDLSHPRHLKSTHSELLEDYYQSGRMLLRMSQALGRIVLAGREMTRLAGFTARITELMQVLKDLNHGKYERTMVSQQEKGIEGVQVIPLIPGAGEIIIADNIIKFDHVPLATPNGDVLIRDLNFEVRSGANVLICGPNGCGKSSLFRVLGELWPLFGGRLTKPERGKLFYVPQRPYMTLGTLRDQVIYPDGREDQKRKGISDLVLKEYLDNVQLGHILEREGGWDSVQDWMDVLSGGEKQRMAMARLFYHKPQFAILDECTSAVSVDVEGYIYSHCRKVGITLFTVSHRKSLWKHHEYYLHMDGRGNYEFKQITEDTVEFGS.

The segment at 1 to 61 (MAAFSKYLTA…GKKERAVVDK (61 aa)) is interaction with PEX19. N-linked (GlcNAc...) asparagine glycosylation is present at asparagine 12. Residue lysine 61 is modified to N6-acetyllysine. The chain crosses the membrane as a helical span at residues 84–104 (GYLVLIAVMLVSRTYCDVWMI). Positions 85-372 (YLVLIAVMLV…MLLRMSQALG (288 aa)) constitute an ABC transmembrane type-1 domain. A glycan (N-linked (GlcNAc...) asparagine) is linked at asparagine 106. The chain crosses the membrane as a helical span at residues 126-146 (LLNFIAAMPLISLVNNFLKYG). Asparagine 206 carries an N-linked (GlcNAc...) asparagine glycan. The chain crosses the membrane as a helical span at residues 224–244 (AIGAQGPASMMAYLVVSGLFL). N6-acetyllysine is present on lysine 260. Residues 313-333 (MGFIDSIIAKYLATVVGYLVV) traverse the membrane as a helical segment. Lysine 399 carries the post-translational modification N6-acetyllysine. Positions 440–659 (IKFDHVPLAT…ITEDTVEFGS (220 aa)) constitute an ABC transporter domain. 473-480 (GPNGCGKS) provides a ligand contact to ATP. At lysine 533 the chain carries N6-acetyllysine. Serine 659 is modified (phosphoserine).

The protein belongs to the ABC transporter superfamily. ABCD family. Peroxisomal fatty acyl CoA transporter (TC 3.A.1.203) subfamily. In terms of assembly, homodimers. Can form heterodimers with ABCD1 and ABCD2. Dimerization is necessary to form an active transporter. Interacts with PEX19; mediates the targeting of ABCD3 to peroxisomes. In terms of processing, ubiquitinated by PEX2 during pexophagy in response to starvation, leading to its degradation.

The protein localises to the peroxisome membrane. The catalysed reaction is a very long-chain fatty acyl-CoA + H2O = a very long-chain fatty acid + CoA + H(+). It carries out the reaction a very long-chain fatty acid(in) + ATP + H2O = a very long-chain fatty acid(out) + ADP + phosphate + H(+). The enzyme catalyses a long-chain fatty acyl-CoA + H2O = a long-chain fatty acid + CoA + H(+). It catalyses the reaction a long-chain fatty acid(in) + ATP + H2O = a long-chain fatty acid(out) + ADP + phosphate + H(+). The catalysed reaction is pristanoyl-CoA + H2O = 2,6,10,14-tetramethylpentadecanoate + CoA + H(+). It carries out the reaction 2,6,10,14-tetramethylpentadecanoate(in) + ATP + H2O = 2,6,10,14-tetramethylpentadecanoate(out) + ADP + phosphate + H(+). The enzyme catalyses hexadecanedioyl-CoA + H2O = hexadecanedioate + CoA + H(+). It catalyses the reaction hexadecanedioate(in) + ATP + H2O = hexadecanedioate(out) + ADP + phosphate + H(+). The catalysed reaction is (5Z,8Z,11Z,14Z,17Z)-eicosapentaenoyl-CoA + H2O = (5Z,8Z,11Z,14Z,17Z)-eicosapentaenoate + CoA + H(+). It carries out the reaction (5Z,8Z,11Z,14Z,17Z)-eicosapentaenoate(in) + ATP + H2O = (5Z,8Z,11Z,14Z,17Z)-eicosapentaenoate(out) + ADP + phosphate + H(+). The enzyme catalyses (4Z,7Z,10Z,13Z,16Z,19Z)-docosahexaenoyl-CoA + H2O = (4Z,7Z,10Z,13Z,16Z,19Z)-docosahexaenoate + CoA + H(+). It catalyses the reaction (4Z,7Z,10Z,13Z,16Z,19Z)-docosahexaenoate(in) + ATP + H2O = (4Z,7Z,10Z,13Z,16Z,19Z)-docosahexaenoate(out) + ADP + phosphate + H(+). Functionally, broad substrate specificity ATP-dependent transporter of the ATP-binding cassette (ABC) family that catalyzes the transport of long-chain fatty acids (LCFA)-CoA, dicarboxylic acids-CoA, long-branched-chain fatty acids-CoA and bile acids from the cytosol to the peroxisome lumen for beta-oxydation. Has fatty acyl-CoA thioesterase and ATPase activities. Probably hydrolyzes fatty acyl-CoAs into free fatty acids prior to their ATP-dependent transport into peroxisomes. Thus, play a role in regulation of LCFAs and energy metabolism namely, in the degradation and biosynthesis of fatty acids by beta-oxidation. The polypeptide is ATP-binding cassette sub-family D member 3 (Homo sapiens (Human)).